The following is a 490-amino-acid chain: Cytochrome P450 2C12, female-specific (490 aa).

Residue Cys435 coordinates heme.

It belongs to the cytochrome P450 family. Requires heme as cofactor.

The protein resides in the endoplasmic reticulum membrane. It localises to the microsome membrane. The enzyme catalyses an organic molecule + reduced [NADPH--hemoprotein reductase] + O2 = an alcohol + oxidized [NADPH--hemoprotein reductase] + H2O + H(+). This P450 is active in 15-beta-hydroxylation of steroid sulfates. This chain is Cytochrome P450 2C12, female-specific (Cyp2c12), found in Rattus norvegicus (Rat).